The following is a 230-amino-acid chain: Ribose-5-phosphate isomerase A (230 aa).

Substrate-binding positions include 28–31, 83–86, and 97–100; these read TGST, DGAD, and KGLG. The active-site Proton acceptor is the E106. K124 contributes to the substrate binding site.

The protein belongs to the ribose 5-phosphate isomerase family. As to quaternary structure, homodimer.

The catalysed reaction is aldehydo-D-ribose 5-phosphate = D-ribulose 5-phosphate. Its pathway is carbohydrate degradation; pentose phosphate pathway; D-ribose 5-phosphate from D-ribulose 5-phosphate (non-oxidative stage): step 1/1. Functionally, catalyzes the reversible conversion of ribose-5-phosphate to ribulose 5-phosphate. This Gloeobacter violaceus (strain ATCC 29082 / PCC 7421) protein is Ribose-5-phosphate isomerase A.